A 608-amino-acid polypeptide reads, in one-letter code: Signal transduction histidine-protein kinase AtoS (608 aa).

Residues Met1–Gln15 are Cytoplasmic-facing. A helical membrane pass occupies residues Met16–Glu36. Residues Thr37–Asp189 lie on the Periplasmic side of the membrane. Residues Val190 to Phe210 form a helical membrane-spanning segment. At Ser211–Val608 the chain is on the cytoplasmic side. The HAMP domain maps to Arg212–Thr262. The 46-residue stretch at Thr260–Gln305 folds into the PAS domain. Residues His326–Gln382 enclose the PAC domain. Residues Gly395–Pro602 enclose the Histidine kinase domain. His398 carries the post-translational modification Phosphohistidine; by autocatalysis.

As to quaternary structure, homodimer. Post-translationally, autophosphorylated. Each AtoS molecule may phosphorylate its partner within the dimer rather than phosphorylating itself.

The protein localises to the cell inner membrane. It carries out the reaction ATP + protein L-histidine = ADP + protein N-phospho-L-histidine.. Its function is as follows. Member of the two-component regulatory system AtoS/AtoC. In the presence of acetoacetate, AtoS/AtoC stimulates the expression of the atoDAEB operon, leading to short chain fatty acid catabolism and activation of the poly-(R)-3-hydroxybutyrate (cPHB) biosynthetic pathway. Also induces the operon in response to spermidine. Involved in the regulation of motility and chemotaxis, via transcriptional induction of the flagellar regulon. AtoS is a membrane-associated kinase that phosphorylates and activates AtoC in response to environmental signals. The sequence is that of Signal transduction histidine-protein kinase AtoS (atoS) from Escherichia coli (strain K12).